We begin with the raw amino-acid sequence, 581 residues long: A-type ATP synthase subunit A (581 aa).

232–239 serves as a coordination point for ATP; that stretch reads GPFGSGKT.

This sequence belongs to the ATPase alpha/beta chains family. Has multiple subunits with at least A(3), B(3), C, D, E, F, H, I and proteolipid K(x).

It localises to the cell membrane. The enzyme catalyses ATP + H2O + 4 H(+)(in) = ADP + phosphate + 5 H(+)(out). Component of the A-type ATP synthase that produces ATP from ADP in the presence of a proton gradient across the membrane. The A chain is the catalytic subunit. This Methanocorpusculum labreanum (strain ATCC 43576 / DSM 4855 / Z) protein is A-type ATP synthase subunit A.